The following is a 1687-amino-acid chain: Vitellogenin-2 (1687 aa).

The first 15 residues, 1–15, serve as a signal peptide directing secretion; that stretch reads MRVLVLALTVALVAG. The 640-residue stretch at 24-663 folds into the Vitellogenin domain; that stretch reads FAPGKTYEYK…DAATVLPKNI (640 aa). N-linked (GlcNAc...) asparagine glycosylation is found at Asn-941, Asn-945, Asn-954, Asn-1004, Asn-1019, and Asn-1083. Residues 1081-1174 form a disordered region; the sequence is LKNSTKASSS…SSSSSKTKWQ (94 aa). Residues 1088 to 1127 show a composition bias toward low complexity; that stretch reads SSSSSGSSRSSRSRSSSSSSSSSSSSSSRSSSSSSRSSSS. N-linked (GlcNAc...) asparagine glycosylation occurs at Asn-1142. The segment covering 1148 to 1169 has biased composition (low complexity); the sequence is SSSSSSSSSSSSSSSSSSSSSS. Residues Asn-1179, Asn-1257, Asn-1292, Asn-1342, Asn-1361, Asn-1366, and Asn-1390 are each glycosylated (N-linked (GlcNAc...) asparagine). The VWFD domain maps to 1417 to 1593; the sequence is AECTVVEDTV…SWVLPAKSCR (177 aa). Intrachain disulfides connect Cys-1419-Cys-1556 and Cys-1442-Cys-1592. 2 N-linked (GlcNAc...) asparagine glycosylation sites follow: Asn-1577 and Asn-1655.

Phosvitin, an egg yolk storage protein, is one of the most highly phosphorylated (10%) proteins in nature. Produced by the liver, secreted into the blood and then sequestered by receptor mediated endocytosis into growing oocytes, where it is generally cleaved, giving rise to the respective yolk components lipovitellins and phosvitin.

In terms of biological role, precursor of the egg-yolk proteins that are sources of nutrients during early development of oviparous organisms. The sequence is that of Vitellogenin-2 from Fundulus heteroclitus (Killifish).